A 266-amino-acid chain; its full sequence is Thiazole synthase (266 aa).

Catalysis depends on Lys106, which acts as the Schiff-base intermediate with DXP. Residues Gly167, 193–194 (AG), and 215–216 (NT) each bind 1-deoxy-D-xylulose 5-phosphate.

Belongs to the ThiG family. In terms of assembly, homotetramer. Forms heterodimers with either ThiH or ThiS.

The protein resides in the plastid. It is found in the chloroplast. The catalysed reaction is [ThiS sulfur-carrier protein]-C-terminal-Gly-aminoethanethioate + 2-iminoacetate + 1-deoxy-D-xylulose 5-phosphate = [ThiS sulfur-carrier protein]-C-terminal Gly-Gly + 2-[(2R,5Z)-2-carboxy-4-methylthiazol-5(2H)-ylidene]ethyl phosphate + 2 H2O + H(+). It participates in cofactor biosynthesis; thiamine diphosphate biosynthesis. Functionally, catalyzes the rearrangement of 1-deoxy-D-xylulose 5-phosphate (DXP) to produce the thiazole phosphate moiety of thiamine. Sulfur is provided by the thiocarboxylate moiety of the carrier protein ThiS. In vitro, sulfur can be provided by H(2)S. The polypeptide is Thiazole synthase (Cyanidium caldarium (Red alga)).